We begin with the raw amino-acid sequence, 158 residues long: NAD(P)H-quinone oxidoreductase subunit J, chloroplastic (158 aa).

Belongs to the complex I 30 kDa subunit family. NDH is composed of at least 16 different subunits, 5 of which are encoded in the nucleus.

It is found in the plastid. It localises to the chloroplast thylakoid membrane. The catalysed reaction is a plastoquinone + NADH + (n+1) H(+)(in) = a plastoquinol + NAD(+) + n H(+)(out). It catalyses the reaction a plastoquinone + NADPH + (n+1) H(+)(in) = a plastoquinol + NADP(+) + n H(+)(out). In terms of biological role, NDH shuttles electrons from NAD(P)H:plastoquinone, via FMN and iron-sulfur (Fe-S) centers, to quinones in the photosynthetic chain and possibly in a chloroplast respiratory chain. The immediate electron acceptor for the enzyme in this species is believed to be plastoquinone. Couples the redox reaction to proton translocation, and thus conserves the redox energy in a proton gradient. This Psilotum nudum (Whisk fern) protein is NAD(P)H-quinone oxidoreductase subunit J, chloroplastic.